Here is a 440-residue protein sequence, read N- to C-terminus: 5-methylthioadenosine/S-adenosylhomocysteine deaminase (440 aa).

Histidine 70 and histidine 72 together coordinate Zn(2+). Substrate-binding residues include glutamate 99 and histidine 191. A Zn(2+)-binding site is contributed by histidine 218. Substrate is bound by residues glutamate 221 and aspartate 306. Aspartate 306 is a binding site for Zn(2+).

The protein belongs to the metallo-dependent hydrolases superfamily. MTA/SAH deaminase family. It depends on Zn(2+) as a cofactor.

The catalysed reaction is S-adenosyl-L-homocysteine + H2O + H(+) = S-inosyl-L-homocysteine + NH4(+). The enzyme catalyses S-methyl-5'-thioadenosine + H2O + H(+) = S-methyl-5'-thioinosine + NH4(+). Its function is as follows. Catalyzes the deamination of 5-methylthioadenosine and S-adenosyl-L-homocysteine into 5-methylthioinosine and S-inosyl-L-homocysteine, respectively. Is also able to deaminate adenosine. This is 5-methylthioadenosine/S-adenosylhomocysteine deaminase from Nitratidesulfovibrio vulgaris (strain DSM 19637 / Miyazaki F) (Desulfovibrio vulgaris).